The sequence spans 215 residues: Large ribosomal subunit protein uL16 (215 aa).

Residues 1 to 22 are disordered; it reads MGRRPARCYRQPKGKPYPKSRY.

Belongs to the universal ribosomal protein uL16 family.

The sequence is that of Large ribosomal subunit protein uL16 (RPL10) from Tetrahymena thermophila (strain SB210).